The chain runs to 413 residues: Serine hydroxymethyltransferase (413 aa).

(6S)-5,6,7,8-tetrahydrofolate is bound by residues leucine 118 and 122–124; that span reads GHL. N6-(pyridoxal phosphate)lysine is present on lysine 228.

Belongs to the SHMT family. In terms of assembly, homodimer. Pyridoxal 5'-phosphate is required as a cofactor.

It localises to the cytoplasm. It carries out the reaction (6R)-5,10-methylene-5,6,7,8-tetrahydrofolate + glycine + H2O = (6S)-5,6,7,8-tetrahydrofolate + L-serine. The protein operates within one-carbon metabolism; tetrahydrofolate interconversion. It functions in the pathway amino-acid biosynthesis; glycine biosynthesis; glycine from L-serine: step 1/1. Functionally, catalyzes the reversible interconversion of serine and glycine with tetrahydrofolate (THF) serving as the one-carbon carrier. This reaction serves as the major source of one-carbon groups required for the biosynthesis of purines, thymidylate, methionine, and other important biomolecules. Also exhibits THF-independent aldolase activity toward beta-hydroxyamino acids, producing glycine and aldehydes, via a retro-aldol mechanism. The sequence is that of Serine hydroxymethyltransferase from Phytoplasma australiense.